Reading from the N-terminus, the 713-residue chain is MASVQQNGQRFGVSEPISMGGPTEFDVIKTRELEKHLQDVGLYESKEEAVRREEVLGILDQIVKTWIKTISRAKGLNDQLLHEANAKIFTFGSYRLGVHGPGADIDTLCVGPRHATREGDFFGELQRMLSEMPEVTELHPVPDAHVPLMGFKLNGVSIDLLYAQLPLWVIPEDLDLSQDSILQNADEQTVRSLNGCRVTDQILRLVPNIQNFRTTLRCMRFWAKRRGVYSNVSGFLGGINWALLVARICQLYPNALPNILVSRFFRVFYQWNWPNAIFLCSPDEGSLGLQVWDPRINPKDRLHIMPIITPAYPCMNSSYNVSESTLRIMKGEFQRGNEICEAMESNKADWDTLFEPFAFFEAYKNYLQIDISAANVDDLRKWKGWVESRLRQLTLKIERHFKMLHCHPHPHDFQDTSRPLHCSYFMGLQRKQGVPAAEGEQFDIRRTVEEFKHTVNAYTLWIPGMEISVGHIKRRSLPNFVFPGGVRPSHTSKGTWDSNRRSEHRNSSTSSAPAATTTTTEMSSESKAGSNSPVDGKKRKWGDSETLTDQPRNSKHIAVSVPVENCEGGSPNPSVGSICSSPMKDYCTNGKSEPISKDPPENVVAFSKDPPESLPIEKIATPQAHETEELEESFDFGNQVIEQISHKVAVLSATATIPPFEATSNGSPFPYEAVEELEVLPTRQPDAAHRPSVQQRKPIIKLSFTSLGKTNGK.

Residues 91 to 93 (FGS), 103 to 106 (ADID), Asp-159, Tyr-229, and 238 to 239 (GI) contribute to the ATP site. Mg(2+)-binding residues include Asp-104, Asp-106, and Asp-159. The segment at 480–555 (FVFPGGVRPS…TLTDQPRNSK (76 aa)) is disordered. Low complexity predominate over residues 507-526 (SSTSSAPAATTTTTEMSSES).

It belongs to the poly(A) polymerase family. Monomer. Forms a complex with cleavage and polyadenylation specificity factor (CPSF) subunit PAPS4. Mg(2+) is required as a cofactor. The cofactor is Mn(2+). As to expression, expressed in stems, cotyledons, hypocotyls, radicle, leaves, and, to a lower extent, in roots (including primary and secondary roots as well as root tips) and flowers. In radicle, roots and leaves, mainly present in vascular tissues.

Its subcellular location is the nucleus. The enzyme catalyses RNA(n) + ATP = RNA(n)-3'-adenine ribonucleotide + diphosphate. Functionally, essential protein. Polymerase that creates the 3'-poly(A) tail of mRNA's. Also required for the endoribonucleolytic cleavage reaction at some polyadenylation sites. May acquire specificity through interaction with a cleavage and polyadenylation specificity factor (CPSF) at its C-terminus. This is Nuclear poly(A) polymerase 1 from Arabidopsis thaliana (Mouse-ear cress).